The primary structure comprises 374 residues: Proteasomal ubiquitin receptor ADRM1 homolog (374 aa).

One can recognise a Pru domain in the interval 13–131 (SSSGHIVEFK…KKVTDALNKP (119 aa)). Disordered regions lie at residues 126-166 (DALN…MNAP), 187-223 (SDTL…NPLS), and 334-374 (ANLT…MDVD). Polar residues-rich tracts occupy residues 141-163 (SAGS…SSDM) and 209-223 (PSTN…NPLS). A DEUBAD domain is found at 239–346 (SQKKEVAVSL…TKAEGGEDAA (108 aa)). The span at 354-368 (DATREPEPKRNRPDN) shows a compositional bias: basic and acidic residues.

The protein belongs to the ADRM1 family. Component of the 19S proteasome regulatory particle complex. The 26S proteasome consists of a 20S core particle (CP) and two 19S regulatory subunits (RP). Interacts with deubiquitinase ubh-4.

It localises to the cytoplasm. It is found in the nucleus. Its function is as follows. May function as a proteasomal ubiquitin receptor. May promote the deubiquitinating activity associated with the 26S proteasome. The polypeptide is Proteasomal ubiquitin receptor ADRM1 homolog (Caenorhabditis elegans).